A 70-amino-acid chain; its full sequence is Large ribosomal subunit protein uL29 (70 aa).

The protein belongs to the universal ribosomal protein uL29 family.

The polypeptide is Large ribosomal subunit protein uL29 (Clostridium botulinum (strain Alaska E43 / Type E3)).